A 379-amino-acid polypeptide reads, in one-letter code: Chorismate synthase (379 aa).

Residues Arg-48 and Arg-54 each coordinate NADP(+). FMN contacts are provided by residues 125-127, 241-242, Gly-286, 301-305, and Arg-327; these read RSS, NA, and KPTSS.

This sequence belongs to the chorismate synthase family. Homotetramer. It depends on FMNH2 as a cofactor.

It catalyses the reaction 5-O-(1-carboxyvinyl)-3-phosphoshikimate = chorismate + phosphate. Its pathway is metabolic intermediate biosynthesis; chorismate biosynthesis; chorismate from D-erythrose 4-phosphate and phosphoenolpyruvate: step 7/7. In terms of biological role, catalyzes the anti-1,4-elimination of the C-3 phosphate and the C-6 proR hydrogen from 5-enolpyruvylshikimate-3-phosphate (EPSP) to yield chorismate, which is the branch point compound that serves as the starting substrate for the three terminal pathways of aromatic amino acid biosynthesis. This reaction introduces a second double bond into the aromatic ring system. This is Chorismate synthase from Rhodospirillum centenum (strain ATCC 51521 / SW).